The following is a 383-amino-acid chain: Seipin (383 aa).

The Cytoplasmic portion of the chain corresponds to 1–27 (MVNDPPVPALLWAQEVGHVLAGRARRL). The chain crosses the membrane as a helical span at residues 28–48 (MLQFGVLFCTILLLLWVSVFL). Over 49–242 (YGSFYYSYMP…TCAFVGVASN (194 aa)) the chain is Lumenal. N-linked (GlcNAc...) asparagine glycosylation is found at Asn-88 and Asn-242. The helical transmembrane segment at 243-263 (FTFLSVIVLFSYMQWVWGAVW) threads the bilayer. The Cytoplasmic portion of the chain corresponds to 264–383 (PRHRFSLQVN…LRQRPTCSSS (120 aa)). A disordered region spans residues 279–383 (NSHHGAPRRI…LRQRPTCSSS (105 aa)). Ser-289 bears the Phosphoserine mark. A compositionally biased stretch (polar residues) spans 292–302 (QPGQESTQQSD). Basic and acidic residues predominate over residues 322–332 (EEEKPEKRPLN). A phosphoserine mark is found at Ser-342 and Ser-345. Residues 353-371 (TEANPPTSASASALAPETL) show a composition bias toward low complexity.

Belongs to the seipin family. Undecamer (an oligomer having eleven subunits). Oligomerization is important for its function in lipid droplet formation. Interacts with LDAF1 to form an oligomeric complex. Interacts with RAB18. Interacts with ZFYVE1 in a RAB18-dependent manner. Expressed in the paraventricular nucleus of the hypothalamus (PVN) and brainstem dorsal vagal complex (DVC) in oxytocin and catecholaminergic neurons (at protein level). Highest expression detected in subcutaneous and epididymal white adipose tissue, brown adipose tissue and testis. Also expressed in brain, skeletal muscle and adrenal gland, with lower levels detected in liver, heart, kidney, spleen, lung and small intestine. In brain, detected in piriform cortex, olfactory tubercle, islands of Calleja, lateral septal nucleus, medial septal nucleus, nucleus of the vertical limb of the diagonal band, nucleus of the horizontal limb of the diagonal band, preoptic area, paraventricular thalamic nucleus, lateral globus pallidus, supraoptic nucleus, suprachiasmatic nucleus, subfornical organ, paraventricular nucleus of the hypothalamus, zona incerta, dorsomedial nucleus of the hypothalamus, ventromedial nucleus of the hypothalamus, arcuate nucleus of the hypothalamus, basomedial amygdaloid nucleus, medial amygdaloid nucleus, medial habenular, pyramidal cell layer of the hippocampus, granular layer of the dentate gyrus, posterior hypothalamus, supramammilliary nucleus, premammillary nucleus, nucleus of Darkschewitsch, Edinger-Westphal nucleus, ventral tegmental area, dorsal raphe nucleus, periaqueductal gray, median raphe nucleus, lateral parabrachial nucleus, dorsal tegmental nucleus, laterodorsal tegmental nucleus, locus coeruleus, Barrington's nucleus, medial vestibular nucleus, ambiguous nucleus, dorsal vagal complex and hypoglossal nucleus.

It localises to the endoplasmic reticulum membrane. The protein localises to the lipid droplet. Functionally, plays a crucial role in the formation of lipid droplets (LDs) which are storage organelles at the center of lipid and energy homeostasis. In association with LDAF1, defines the sites of LD formation in the ER. Also required for growth and maturation of small nascent LDs into larger mature LDs. Mediates the formation and/or stabilization of endoplasmic reticulum-lipid droplets (ER-LD) contacts, facilitating protein and lipid delivery from the ER into growing LDs. Regulates the maturation of ZFYVE1-positive nascent LDs and the function of the RAB18-ZFYVE1 complex in mediating the formation of ER-LD contacts. Binds anionic phospholipids including phosphatidic acid. Plays an important role in the differentiation and development of adipocytes. In Mus musculus (Mouse), this protein is Seipin.